A 494-amino-acid polypeptide reads, in one-letter code: Glycosyl hydrolase family 109 protein (494 aa).

2 disordered regions span residues 1 to 35 (MNDA…LRTT) and 59 to 86 (EAAQ…MAGV). Residues 1–55 (MNDAAPQNPGQDEAKGTGEKDNGGSMSPRSALRTTAGVAGAGLGLSALGTGTASA) constitute a signal peptide (tat-type signal). The span at 12–22 (DEAKGTGEKDN) shows a compositional bias: basic and acidic residues. Residues 103 to 104 (NR), aspartate 125, 174 to 177 (WDFH), 194 to 195 (EC), and asparagine 223 contribute to the NAD(+) site. Substrate is bound by residues tyrosine 252, arginine 271, 283 to 286 (YPNH), and tyrosine 365. Tyrosine 283 lines the NAD(+) pocket. The disordered stretch occupies residues 463-494 (KANGKPQQIPDFTRGEWKKSRPGTDSEKPSEP). Over residues 475 to 494 (TRGEWKKSRPGTDSEKPSEP) the composition is skewed to basic and acidic residues.

It belongs to the Gfo/Idh/MocA family. Glycosyl hydrolase 109 subfamily. It depends on NAD(+) as a cofactor. Post-translationally, predicted to be exported by the Tat system. The position of the signal peptide cleavage has not been experimentally proven.

Its function is as follows. Glycosidase. This is Glycosyl hydrolase family 109 protein from Streptomyces niveus (Streptomyces spheroides).